The following is a 100-amino-acid chain: MGALTKAEMAERLYEELGLNKREAKELVELFFEEIRQALEHNEQVKLSGFGNFDLRDKRQRPGRNPKTGEEIPITARRVVTFRPGQKLKARVEAYAGTKP.

A disordered region spans residues 53 to 72 (FDLRDKRQRPGRNPKTGEEI).

The protein belongs to the bacterial histone-like protein family. In terms of assembly, heterodimer of an alpha and a beta chain.

In terms of biological role, this protein is one of the two subunits of integration host factor, a specific DNA-binding protein that functions in genetic recombination as well as in transcriptional and translational control. The chain is Integration host factor subunit alpha from Stutzerimonas stutzeri (strain A1501) (Pseudomonas stutzeri).